The sequence spans 480 residues: MQKLNKNVYDHYTQYPEKILQFGEGNFLRGFIDWQIDQLNQHTDFNGSVAVVQPRGSEKIKRLNEQDGLYTLFLQGMKDGEAVNEHMIINSISRGIDLFSDYEAYKELASSERLRFIISNTTEAGIVCDEKDRLEDRPQKTFPGKLTAFLYFRYQAFKGDQTKGCVLIPCELIENNGEKLRETVLHYAHLWKLEEGFTQWIHEANTFCNSLVDRIVPGFPVDSIDEITADLGYQDDLIVVGEQYYLWVIEGPDWIGKELPFAAAGLHTKIVSDLTPYRTKKVRILNGAHTAMTPVALLYGLKTVRDAVEHPEVGRFIRELIDDEILPVLKMEGLSQYADDVLNRFKNPYIKHYLESIALNAISKFKTRNLPTLKEYAEQKGQLPERLVFSFSALLYFYHDNETLQDDPAVLQFFKEVWCQEDGDMLRIASRVLGEQRLWGADLNEIPKLTDRVAVYLNHIHELGMQRALEQYCIQGGEVR.

19–30 (ILQFGEGNFLRG) serves as a coordination point for NAD(+).

This sequence belongs to the mannitol dehydrogenase family. UxaB subfamily.

The catalysed reaction is D-altronate + NAD(+) = keto-D-tagaturonate + NADH + H(+). The protein operates within carbohydrate metabolism; pentose and glucuronate interconversion. In Bacillus subtilis (strain 168), this protein is Altronate oxidoreductase.